Reading from the N-terminus, the 522-residue chain is Zinc finger protein C25B8.19c (522 aa).

5 disordered regions span residues 1–25 (MSSD…LPTT), 61–96 (DPQA…SNSN), 235–265 (QRQS…QEVT), 311–386 (QPSS…HTLS), and 413–462 (NSAQ…STSS). Residues 84 to 96 (AGNTNTPTTSNSN) show a composition bias toward low complexity. Polar residues-rich tracts occupy residues 311–321 (QPSSRDLQNHP) and 335–344 (ASNTLNHANG). Positions 345–362 (NQAENASESSTSQSNDSQ) are enriched in low complexity. Polar residues predominate over residues 413–427 (NSAQAHPMGQQSDSN). Basic and acidic residues predominate over residues 428-438 (YSDHHNNDKRA). The segment covering 453–462 (SHTGSSSTSS) has biased composition (low complexity). 2 C2H2-type zinc fingers span residues 468–495 (YRCT…GERP) and 496–522 (FVCD…IHGL).

Its subcellular location is the nucleus. In Schizosaccharomyces pombe (strain 972 / ATCC 24843) (Fission yeast), this protein is Zinc finger protein C25B8.19c.